A 321-amino-acid chain; its full sequence is Ubiquitin-conjugating enzyme E2 U (321 aa).

Residues 4 to 153 (RAYLLLHRDF…LRLFNRPLQM (150 aa)) enclose the UBC core domain. Catalysis depends on C89, which acts as the Glycyl thioester intermediate. A disordered region spans residues 285–321 (WKSDTSLYENDTDEPREEEVEDLISWTNTLNTNTSED). Residues 294 to 306 (NDTDEPREEEVED) show a composition bias toward acidic residues. Over residues 309 to 321 (SWTNTLNTNTSED) the composition is skewed to polar residues.

The protein belongs to the ubiquitin-conjugating enzyme family. Post-translationally, autoubiquitinated in vitro in the presence of UBR5.

The enzyme catalyses S-ubiquitinyl-[E1 ubiquitin-activating enzyme]-L-cysteine + [E2 ubiquitin-conjugating enzyme]-L-cysteine = [E1 ubiquitin-activating enzyme]-L-cysteine + S-ubiquitinyl-[E2 ubiquitin-conjugating enzyme]-L-cysteine.. Its pathway is protein modification; protein ubiquitination. Functionally, catalyzes the covalent attachment of ubiquitin to other proteins. This is Ubiquitin-conjugating enzyme E2 U (UBE2U) from Homo sapiens (Human).